Here is a 245-residue protein sequence, read N- to C-terminus: Pyridoxine 5'-phosphate synthase (245 aa).

Residue asparagine 7 participates in 3-amino-2-oxopropyl phosphate binding. Residue 9–10 (DH) participates in 1-deoxy-D-xylulose 5-phosphate binding. Arginine 18 is a binding site for 3-amino-2-oxopropyl phosphate. The active-site Proton acceptor is the histidine 43. Arginine 45 and histidine 50 together coordinate 1-deoxy-D-xylulose 5-phosphate. The active-site Proton acceptor is the glutamate 70. Threonine 100 contributes to the 1-deoxy-D-xylulose 5-phosphate binding site. Histidine 190 (proton donor) is an active-site residue. Residues glycine 191 and 212 to 213 (GH) each bind 3-amino-2-oxopropyl phosphate.

This sequence belongs to the PNP synthase family. In terms of assembly, homooctamer; tetramer of dimers.

It is found in the cytoplasm. The catalysed reaction is 3-amino-2-oxopropyl phosphate + 1-deoxy-D-xylulose 5-phosphate = pyridoxine 5'-phosphate + phosphate + 2 H2O + H(+). It participates in cofactor biosynthesis; pyridoxine 5'-phosphate biosynthesis; pyridoxine 5'-phosphate from D-erythrose 4-phosphate: step 5/5. Functionally, catalyzes the complicated ring closure reaction between the two acyclic compounds 1-deoxy-D-xylulose-5-phosphate (DXP) and 3-amino-2-oxopropyl phosphate (1-amino-acetone-3-phosphate or AAP) to form pyridoxine 5'-phosphate (PNP) and inorganic phosphate. This is Pyridoxine 5'-phosphate synthase from Prochlorococcus marinus (strain MIT 9313).